The sequence spans 352 residues: RING finger protein 39 (352 aa).

Residues 20 to 67 form an RING-type zinc finger; that stretch reads CPLCGGPFEDPVLLACEHSFCRSCLARCWGSPAAPGSEEATPSCPCCG. Residues 98 to 118 are disordered; sequence PGARTGRRRGGRIPTMGCLDP. Residues 142–352 enclose the B30.2/SPRY domain; sequence EDLPEDYPVV…APLRIVPGEA (211 aa).

Expressed in the hippocampus. Expression is rapidly up-regulated in granule cells of the dentate gyrus after LTP induction.

It is found in the cytoplasm. The catalysed reaction is S-ubiquitinyl-[E2 ubiquitin-conjugating enzyme]-L-cysteine + [acceptor protein]-L-lysine = [E2 ubiquitin-conjugating enzyme]-L-cysteine + N(6)-ubiquitinyl-[acceptor protein]-L-lysine.. It participates in protein modification; protein ubiquitination. Its function is as follows. Plays an inhibitory role in anti-RNA viral innate immunity by targeting the adapter DDX3X and promoting its 'Lys-48'-linked polyubiquitination. Alternatively, enhances the cGAS-STING pathway activation by promoting 'Lys-63'-linked ubiquitination of STING1, facilitating the STING1-TBK1 complex formation and STING1 activation. The sequence is that of RING finger protein 39 (Rnf39) from Rattus norvegicus (Rat).